The following is a 333-amino-acid chain: Glycerol-3-phosphate dehydrogenase [NAD(P)+] (333 aa).

Ser10, Trp11, His31, Arg32, and Lys105 together coordinate NADPH. Residues Lys105, Gly136, and Ser138 each coordinate sn-glycerol 3-phosphate. Ala140 contacts NADPH. Sn-glycerol 3-phosphate-binding residues include Lys191, Asp244, Ser254, Arg255, and Asn256. Lys191 (proton acceptor) is an active-site residue. An NADPH-binding site is contributed by Arg255. The NADPH site is built by Ile279 and Glu281.

The protein belongs to the NAD-dependent glycerol-3-phosphate dehydrogenase family.

The protein localises to the cytoplasm. It carries out the reaction sn-glycerol 3-phosphate + NAD(+) = dihydroxyacetone phosphate + NADH + H(+). The enzyme catalyses sn-glycerol 3-phosphate + NADP(+) = dihydroxyacetone phosphate + NADPH + H(+). It participates in membrane lipid metabolism; glycerophospholipid metabolism. Its function is as follows. Catalyzes the reduction of the glycolytic intermediate dihydroxyacetone phosphate (DHAP) to sn-glycerol 3-phosphate (G3P), the key precursor for phospholipid synthesis. This Chlorobium chlorochromatii (strain CaD3) protein is Glycerol-3-phosphate dehydrogenase [NAD(P)+].